A 334-amino-acid polypeptide reads, in one-letter code: N-acetylmuramoyl-L-alanine amidase sle1 (334 aa).

Positions 1 to 25 are cleaved as a signal peptide; the sequence is MQKKVIAAIIGTSAISAVAATQANA. Residues 27–70 form the LysM 1 domain; it reads TTHTVKPGESVWAISNKYGISIAKLKSLNNLTSNLIFPNQVLKV. The segment covering 71–86 has biased composition (low complexity); sequence SGSSNSTSNSSRPSTN. The segment at 71 to 90 is disordered; that stretch reads SGSSNSTSNSSRPSTNSGGG. In terms of domain architecture, LysM 2 spans 91-134; sequence SYYTVQAGDSLSLIASKYGTTYQNIMRLNGLNNFFIYPGQKLKV. The interval 137–156 is disordered; sequence TASSSNSTSNSSRPSTNSSG. Positions 158-201 constitute a LysM 3 domain; that stretch reads SYYTVQAGDSLSLIASKYGTTYQNIMRLNGLNNFFIYPGQKLKV. In terms of domain architecture, Peptidase C51 spans 210–334; that stretch reads GSTTTTNRGY…YQVNNYRYIH (125 aa).

The protein resides in the secreted. It is found in the cell surface. The catalysed reaction is Hydrolyzes the link between N-acetylmuramoyl residues and L-amino acid residues in certain cell-wall glycopeptides.. In terms of biological role, peptidoglycan hydrolase involved in the splitting of the septum during cell division. The polypeptide is N-acetylmuramoyl-L-alanine amidase sle1 (sle1) (Staphylococcus aureus (strain MRSA252)).